Consider the following 190-residue polypeptide: Zinc metalloproteinase/disintegrin (190 aa).

The region spanning 1–11 (NHNPECIVNEP) is the Peptidase M12B domain. The region spanning 19-105 (PPVCGNELLE…ECPADVFHKN (87 aa)) is the Disintegrin domain. Ca(2+)-binding residues include valine 21, asparagine 24, leucine 26, glutamate 28, glutamate 31, and aspartate 34. 6 cysteine pairs are disulfide-bonded: cysteine 33–cysteine 51, cysteine 35–cysteine 46, cysteine 45–cysteine 68, cysteine 59–cysteine 65, cysteine 64–cysteine 90, and cysteine 77–cysteine 97. Residues 83–85 (ECD) carry the D/ECD-tripeptide motif. Ca(2+) is bound by residues aspartate 85, proline 86, glutamate 88, aspartate 100, and valine 101. Residues 104-190 (KNGQPCLDNY…DNSPGQNGPC (87 aa)) constitute a propeptide that is removed on maturation.

It belongs to the venom metalloproteinase (M12B) family. P-III subfamily. Monomer. Requires Zn(2+) as cofactor. As to expression, expressed by the venom gland.

It localises to the secreted. Impairs hemostasis in the envenomed animal. In terms of biological role, inhibits platelet aggregation induced by ADP, thrombin, platelet-activating factor and collagen. Acts by inhibiting fibrinogen interaction with platelet receptors GPIIb/GPIIIa (ITGA2B/ITGB3). The polypeptide is Zinc metalloproteinase/disintegrin (Gloydius brevicauda (Korean slamosa snake)).